We begin with the raw amino-acid sequence, 155 residues long: Interleukin-2 (155 aa).

Positions 1 to 20 (MYKIQLLSCIALTLALVANG) are cleaved as a signal peptide. Residue threonine 23 is glycosylated (O-linked (GalNAc...) threonine). Cysteine 79 and cysteine 127 are oxidised to a cystine.

The protein belongs to the IL-2 family.

It is found in the secreted. Functionally, cytokine produced by activated CD4-positive helper T-cells and to a lesser extend activated CD8-positive T-cells and natural killer (NK) cells that plays pivotal roles in the immune response and tolerance. Binds to a receptor complex composed of either the high-affinity trimeric IL-2R (IL2RA/CD25, IL2RB/CD122 and IL2RG/CD132) or the low-affinity dimeric IL-2R (IL2RB and IL2RG). Interaction with the receptor leads to oligomerization and conformation changes in the IL-2R subunits resulting in downstream signaling starting with phosphorylation of JAK1 and JAK3. In turn, JAK1 and JAK3 phosphorylate the receptor to form a docking site leading to the phosphorylation of several substrates including STAT5. This process leads to activation of several pathways including STAT, phosphoinositide-3-kinase/PI3K and mitogen-activated protein kinase/MAPK pathways. Functions as a T-cell growth factor and can increase NK-cell cytolytic activity as well. Promotes strong proliferation of activated B-cells and subsequently immunoglobulin production. Plays a pivotal role in regulating the adaptive immune system by controlling the survival and proliferation of regulatory T-cells, which are required for the maintenance of immune tolerance. Moreover, participates in the differentiation and homeostasis of effector T-cell subsets, including Th1, Th2, Th17 as well as memory CD8-positive T-cells. This Boselaphus tragocamelus (Nilgai) protein is Interleukin-2 (IL2).